The chain runs to 638 residues: Chaperone protein DnaK (638 aa).

T197 is modified (phosphothreonine; by autocatalysis). The interval 600 to 638 (SGAQGGAQAGPGAGAGQQANQGSSNNKEDIQDADFEEVK) is disordered. Positions 602–614 (AQGGAQAGPGAGA) are enriched in gly residues. Over residues 615 to 624 (GQQANQGSSN) the composition is skewed to low complexity. Residues 625–638 (NKEDIQDADFEEVK) are compositionally biased toward basic and acidic residues.

Belongs to the heat shock protein 70 family.

Its function is as follows. Acts as a chaperone. The polypeptide is Chaperone protein DnaK (Phocaeicola vulgatus (strain ATCC 8482 / DSM 1447 / JCM 5826 / CCUG 4940 / NBRC 14291 / NCTC 11154) (Bacteroides vulgatus)).